A 78-amino-acid polypeptide reads, in one-letter code: Gas vesicle protein A (78 aa).

Belongs to the gas vesicle GvpA family. As to quaternary structure, the gas vesicle shell is 2 nm thick and consists of a single layer of this protein. It forms helical ribs nearly perpendicular to the long axis of the vesicle.

The protein resides in the gas vesicle shell. Gas vesicles are hollow, gas filled proteinaceous nanostructures found in some microorganisms. During planktonic growth they allow positioning of the organism at a favorable depth for light or nutrient acquisition. GvpA forms the protein shell. This Halorubrum vacuolatum (Natronobacterium vacuolatum) protein is Gas vesicle protein A.